Consider the following 323-residue polypeptide: Methionyl-tRNA formyltransferase (323 aa).

117 to 120 (SLLP) is a binding site for (6S)-5,6,7,8-tetrahydrofolate.

It belongs to the Fmt family.

The enzyme catalyses L-methionyl-tRNA(fMet) + (6R)-10-formyltetrahydrofolate = N-formyl-L-methionyl-tRNA(fMet) + (6S)-5,6,7,8-tetrahydrofolate + H(+). Functionally, attaches a formyl group to the free amino group of methionyl-tRNA(fMet). The formyl group appears to play a dual role in the initiator identity of N-formylmethionyl-tRNA by promoting its recognition by IF2 and preventing the misappropriation of this tRNA by the elongation apparatus. This Albidiferax ferrireducens (strain ATCC BAA-621 / DSM 15236 / T118) (Rhodoferax ferrireducens) protein is Methionyl-tRNA formyltransferase.